The primary structure comprises 190 residues: Probable GTP-binding protein EngB (190 aa).

The EngB-type G domain maps to 22-190; sequence VKREVAFAGR…LNELLKILIP (169 aa). Residues 30-37, 56-60, 74-77, 141-144, and 173-175 contribute to the GTP site; these read GRSNVGKS, GKTRS, DLPG, TKTD, and FSA. Residues serine 37 and threonine 58 each contribute to the Mg(2+) site.

The protein belongs to the TRAFAC class TrmE-Era-EngA-EngB-Septin-like GTPase superfamily. EngB GTPase family. It depends on Mg(2+) as a cofactor.

Functionally, necessary for normal cell division and for the maintenance of normal septation. The polypeptide is Probable GTP-binding protein EngB (Kosmotoga olearia (strain ATCC BAA-1733 / DSM 21960 / TBF 19.5.1)).